The sequence spans 48 residues: SPbeta prophage-derived uncharacterized protein YotE (48 aa).

This is SPbeta prophage-derived uncharacterized protein YotE (yotE) from Bacillus subtilis (strain 168).